A 368-amino-acid polypeptide reads, in one-letter code: MEVVSELVQFMQPNQRLDLKAVALTHVLGLTGSAEGKAAILALDDMLMAIFGLTFDDNHTVAKDAVLSLINLTADEECATKVFHLAKRIQPPFAIVEVAATQISDEQSPLADPWSMVLSNLTRVESLVHEILDILERGEQTLPRLAKAFAQLDYNKKKARLHYLAPIFCNLTQVARGRELCCHARYQLLEKLLPFASYEENVVRRGGTIGILKNVCFDAVYHGVILGEDDNILVAILQPLCGPEEFSDEENDMLPIELQYLPESKTRETDPDLRKMLLECLLQLCSTRRSREILRAKGVYEILREYHKWEARVGLDRDCLLACENVVDILIKKEEEIGLDNYKNVEVPAEQAEKFVQEDVEYVKSLLD.

This sequence belongs to the HGH1 family.

The polypeptide is Protein HGH1 homolog (Drosophila pseudoobscura pseudoobscura (Fruit fly)).